A 368-amino-acid chain; its full sequence is Biglycan (368 aa).

The signal sequence occupies residues M1–A16. A propeptide spanning residues L17–K37 is cleaved from the precursor. Disulfide bonds link C63/C69 and C67/C76. LRR repeat units follow at residues T82 to I102, T103 to I126, S127 to L150, E151 to I171, K172 to L195, E196 to L220, S221 to I241, Q242 to I265, R266 to L289, S290 to I312, T313 to V342, and P343 to K368. 2 N-linked (GlcNAc...) asparagine glycosylation sites follow: N270 and N311. Cysteines 321 and 354 form a disulfide.

It belongs to the small leucine-rich proteoglycan (SLRP) family. SLRP class I subfamily.

It localises to the secreted. It is found in the extracellular space. The protein resides in the extracellular matrix. Its function is as follows. May be involved in collagen fiber assembly. The chain is Biglycan (bgn) from Xenopus laevis (African clawed frog).